A 417-amino-acid chain; its full sequence is Testis-specific Y-encoded-like protein 5 (417 aa).

The segment covering 1–25 (MSGRSRGRKSSRAKNRGKGRAKARV) has biased composition (basic residues). 4 disordered regions span residues 1–55 (MSGR…QVQA), 93–112 (AAGD…AASL), 127–202 (GTVG…EGSM), and 391–417 (KGKE…SQSN). A compositionally biased stretch (basic and acidic residues) spans 27-37 (PAPDDAPRDPD). The span at 93-103 (AAGDHGQAAAR) shows a compositional bias: low complexity. The span at 182-191 (GEEKKEERDA) shows a compositional bias: basic and acidic residues. A compositionally biased stretch (polar residues) spans 406 to 417 (METTQPGVSQSN).

This sequence belongs to the nucleosome assembly protein (NAP) family. Interacts with USP7.

Its function is as follows. Involved in modulation of cell growth and cellular response to gamma radiation probably via regulation of the Akt signaling pathway. Involved in regulation of p53/TP53. Suppresses p53/TP53 protein levels and promotes its ubiquitination; the function is dependent on USP7 and independent on MDM2. Proposed to displace p53/TP53 from interaction with USP7. This is Testis-specific Y-encoded-like protein 5 (TSPYL5) from Homo sapiens (Human).